The primary structure comprises 319 residues: 4-diphosphocytidyl-2-C-methyl-D-erythritol kinase (319 aa).

The active site involves Lys-21. Residue 106–116 (PIGAGLAGGSS) participates in ATP binding. Asp-148 is an active-site residue.

This sequence belongs to the GHMP kinase family. IspE subfamily.

The enzyme catalyses 4-CDP-2-C-methyl-D-erythritol + ATP = 4-CDP-2-C-methyl-D-erythritol 2-phosphate + ADP + H(+). It participates in isoprenoid biosynthesis; isopentenyl diphosphate biosynthesis via DXP pathway; isopentenyl diphosphate from 1-deoxy-D-xylulose 5-phosphate: step 3/6. In terms of biological role, catalyzes the phosphorylation of the position 2 hydroxy group of 4-diphosphocytidyl-2C-methyl-D-erythritol. In Prochlorococcus marinus (strain SARG / CCMP1375 / SS120), this protein is 4-diphosphocytidyl-2-C-methyl-D-erythritol kinase.